The primary structure comprises 289 residues: Ribosomal protein L11 methyltransferase (289 aa).

Residues Thr142, Gly163, Asp185, and Asn226 each contribute to the S-adenosyl-L-methionine site.

This sequence belongs to the methyltransferase superfamily. PrmA family.

The protein localises to the cytoplasm. The enzyme catalyses L-lysyl-[protein] + 3 S-adenosyl-L-methionine = N(6),N(6),N(6)-trimethyl-L-lysyl-[protein] + 3 S-adenosyl-L-homocysteine + 3 H(+). Methylates ribosomal protein L11. This Legionella pneumophila (strain Corby) protein is Ribosomal protein L11 methyltransferase.